Consider the following 450-residue polypeptide: Zinc finger protein 277 (450 aa).

Ala-2 is modified (N-acetylalanine). 2 consecutive C2H2-type zinc fingers follow at residues 224-248 and 355-381; these read LQCLYCEKTFRDKNTLKDHMRKKQH and HQCRCYGCHVKFKSKADLRTHMEETKH.

The protein belongs to the ZNF277 family. In terms of assembly, interacts (via zinc-finger domains) with RPS2/40S ribosomal protein S2, perhaps as nascent RPS2 is synthesized during translation; the interaction is direct; the interaction is extra-ribosomal. Interaction with RPS2 competes with the binding of RPS2 to protein arginine methyltransferase PRMT3. Interacts with Polycomb group (PcG) complex protein BMI1. May be part of a complex including at least ZNF277, BMI1 and RNF2/RING2.

It localises to the nucleus. Probable transcription factor. Involved in modulation of cellular senescence; represses transcription of the tumor suppressor gene INK4A/ARF, perhaps acting via the Polycomb group (PcG) complex PRC1. The polypeptide is Zinc finger protein 277 (ZNF277) (Homo sapiens (Human)).